Consider the following 508-residue polypeptide: MIDHLKRTKIIATCGPALTKSLVSLKMLDDNEYAAIKKVAYANIEAIIKSGVSVIRLNFSHGTHEEQQVRIKIVRDVAKAMNIPVSIMLDTNGPEIRIVETKKEGLKITKDSEVIINTMSKMIASDNQFAVSDASGKYNMVNDVNIGQKILVDDGKLTLVVTRVDKQHNQVICVAKNDHTVFTKKRLNLPNAQYSIPFLSEKDLKDIDFGLSQGIDYIAASFVNTVADIKQLRDYLKLKNASGVKIIAKIESNHALNNIDKIIKASDGIMVARGDLGLEIPYYQVPYWQRYMIKACRFFNKRSITATQMLDSLEKNIQPTRAEVTDVYFAVDRGNDATMLSGETASGLYPLNAVAVMQKIDKQSETFFDYQYNVNYYLKNSTANKSRFWHNVVLPLTKKTVPKRKLVNSAFKYDFIVYPTNNINRIYALSNARLAAAVIILTNNKRVYTGHGVDYGIFCYLIDKNPNQLTKAELIELAWKAINHYQAYGDLEKLKQCLAVYNETIINL.

Arg56 serves as a coordination point for substrate. 4 residues coordinate K(+): Asn58, Ser60, Asp90, and Thr91. Residue Asn58–His61 participates in ATP binding. ATP is bound by residues Arg97 and Lys185. Glu251 contributes to the Mg(2+) binding site. Substrate-binding residues include Gly274, Asp275, and Thr307. A Mg(2+)-binding site is contributed by Asp275.

The protein belongs to the pyruvate kinase family. Homotetramer. The cofactor is Mg(2+). K(+) serves as cofactor.

It catalyses the reaction pyruvate + ATP = phosphoenolpyruvate + ADP + H(+). It functions in the pathway carbohydrate degradation; glycolysis; pyruvate from D-glyceraldehyde 3-phosphate: step 5/5. With respect to regulation, regulated by phosphoenolpyruvate substrate and is allosterically activated by ribose-5-phosphate, AMP and other nucleoside monophosphates but not by fructose-1,6-bisphosphate. This is Pyruvate kinase (pyk) from Mycoplasma genitalium (strain ATCC 33530 / DSM 19775 / NCTC 10195 / G37) (Mycoplasmoides genitalium).